Consider the following 933-residue polypeptide: Progesterone receptor (933 aa).

The AF3; mediates transcriptional activation stretch occupies residues 1–164; the sequence is MTELKAKGPR…PATQRVLSPL (164 aa). The interval 1-256 is disordered; the sequence is MTELKAKGPR…AAAGGGAAAV (256 aa). Positions 1-566 are modulating, Pro-Rich; it reads MTELKAKGPR…YSFESLPQKI (566 aa). The residue at position 20 (Ser-20) is a Phosphoserine. 2 short sequence motifs (LXXL motif) span residues 55–59 and 115–119; these read LDGLL and LDTLL. A phosphoserine mark is found at Ser-130 and Ser-162. Residues 165–305 form a mediates transcriptional transrepression region; it reads MSRSGGKAGD…LATTTMDFIH (141 aa). The short motif at 183–187 is the Nuclear localization signal element; the sequence is KVLPR. Residues Ser-190 and Ser-213 each carry the phosphoserine modification. Residues 220 to 231 are compositionally biased toward acidic residues; it reads EVEEEDGSESED. The residue at position 294 (Ser-294) is a Phosphoserine; by MAPK1. The tract at residues 332 to 380 is disordered; sequence GAGAASAFAPPRSSPSASSTPVAVGDFPDCAYPPDADPKDDAYPLYGDF. Positions 335–350 are enriched in low complexity; the sequence is AASAFAPPRSSPSASS. Ser-345 is subject to Phosphoserine; by MAPK. Lys-388 is covalently cross-linked (Glycyl lysine isopeptide (Lys-Gly) (interchain with G-Cter in SUMO); alternate). Lys-388 participates in a covalent cross-link: Glycyl lysine isopeptide (Lys-Gly) (interchain with G-Cter in ubiquitin); alternate. Ser-400 is subject to Phosphoserine; by CDK2. The tract at residues 415–454 is disordered; the sequence is PDFPLGPPPPLPPRAPPSRPGEAAVTAAPASASVSSSSSS. Over residues 418-433 the composition is skewed to pro residues; sequence PLGPPPPLPPRAPPSR. Residues 434 to 454 show a composition bias toward low complexity; it reads PGEAAVTAAPASASVSSSSSS. An AF1; mediates transcriptional activation region spans residues 456–546; that stretch reads STLECILYKA…VYPPYLNYLR (91 aa). Lys-531 is covalently cross-linked (Glycyl lysine isopeptide (Lys-Gly) (interchain with G-Cter in SUMO)). 2 NR C4-type zinc fingers span residues 567 to 587 and 603 to 627; these read CLIC…CGSC and CAGR…LRKC. A DNA-binding region (nuclear receptor) is located at residues 567-639; the sequence is CLICGDEASG…AGMVLGGRKF (73 aa). Ser-676 is subject to Phosphoserine. The 235-residue stretch at 679–913 folds into the NR LBD domain; that stretch reads QDIQFFPPLI…EFPEMMSEVI (235 aa). The AF2; mediates transcriptional activation stretch occupies residues 687–933; sequence LINLLVSIEP…MVKPLLFHKK (247 aa). Residue Arg-766 participates in progesterone binding.

Belongs to the nuclear hormone receptor family. In terms of assembly, interacts with SMARD1 and UNC45A. Interacts with CUEDC2; the interaction promotes ubiquitination, decreases sumoylation, and represses transcriptional activity. Interacts with PIAS3; the interaction promotes sumoylation of PR in a hormone-dependent manner, inhibits DNA-binding, and alters nuclear export. Interacts with SP1; the interaction requires ligand-induced phosphorylation on Ser-345 by ERK1/2-MAPK. Interacts with PRMT2. Interacts with NCOA2 and NCOA1. Interacts with KLF9. Interacts with GTF2B. Post-translationally, phosphorylated on multiple serine sites. Several of these sites are hormone-dependent. Phosphorylation on Ser-294 is highly hormone-dependent and modulates ubiquitination and sumoylation on Lys-388. Phosphorylation on Ser-345 also requires induction by hormone. Basal phosphorylation on Ser-162, Ser-190 and Ser-400 is increased in response to progesterone and can be phosphorylated in vitro by the CDK2-A1 complex. Increased levels of phosphorylation on Ser-400 also in the presence of EGF, heregulin, IGF, PMA and FBS. Phosphorylation at this site by CDK2 is ligand-independent, and increases nuclear translocation and transcriptional activity. Phosphorylation at Ser-162 and Ser-294, but not at Ser-190, is impaired during the G(2)/M phase of the cell cycle. Phosphorylation on Ser-345 by ERK1/2 MAPK is required for interaction with SP1. Sumoylation is hormone-dependent and represses transcriptional activity. Sumoylation on all three sites is enhanced by PIAS3. Desumoylated by SENP1. Sumoylation on Lys-388, the main site of sumoylation, is repressed by ubiquitination on the same site, and modulated by phosphorylation at Ser-294. In terms of processing, ubiquitination is hormone-dependent and represses sumoylation on the same site. Promoted by MAPK-mediated phosphorylation on Ser-294. Ubiquitinated by UBR5, leading to its degradation: UBR5 specifically recognizes and binds ligand-bound PGR when it is not associated with coactivators (NCOAs). In presence of NCOAs, the UBR5-degron is not accessible, preventing its ubiquitination and degradation. Post-translationally, palmitoylated by ZDHHC7 and ZDHHC21. Palmitoylation is required for plasma membrane targeting and for rapid intracellular signaling via ERK and AKT kinases and cAMP generation.

It localises to the nucleus. The protein localises to the cytoplasm. In terms of biological role, the steroid hormones and their receptors are involved in the regulation of eukaryotic gene expression and affect cellular proliferation and differentiation in target tissues. Transcriptional activator of several progesteron-dependent promoters in a variety of cell types. Involved in activation of SRC-dependent MAPK signaling on hormone stimulation. This chain is Progesterone receptor (PGR), found in Chlorocebus aethiops (Green monkey).